Consider the following 541-residue polypeptide: MSKQIEFNETARRAMEAGVDKLADAVKVTLGPRGRHVVLAKSWGGPTVTNDGVTIAREIDLEDPFENLGAQLVKSVATKTNDVAGDGTTTATVLAQALVKAGLRNVAAGANPIALGAGIAKAADAVSEALLASATPVKDAKSIGQVATVSSRDELVGELVGEAMTKVGTDGVVTVEESSTLNTELEVTEGVGFDKGFISAYFVTDFDSQEAVLEDALVLLHREKISSLPDLLPLLEKVAEAGKPLLIVAEDVEGEALSTLVVNAIRKTLKAVAVKAPFFGDRRKAFLDDLAVVTGGQVVNPDVGLVLREVGLEVLGTARRVVVDKDSTVIVDGGGTQDAIEGRKGQLRAEIEVSDSDWDREKLEERLAKLAGGVAVIKVGAATETDLKKRKEAVEDAVAAAKAAVEEGIVIGGGAALVHAGSALDSLRSELKGDELLGVEVFASALSSPLYWIATNAGLDGAVVVNKVSELPAGQGFNAATLEYGDLIGDGVIDPVKVTRSAVVNAASVARMVLTTETAVVEKPAEAEDDGHGHGHGHHHH.

Residues 29 to 32 (TLGP), 86 to 90 (DGTTT), Gly413, 478 to 480 (NAA), and Asp494 contribute to the ATP site. Residues 520–541 (VVEKPAEAEDDGHGHGHGHHHH) form a disordered region. The span at 523-533 (KPAEAEDDGHG) shows a compositional bias: basic and acidic residues.

It belongs to the chaperonin (HSP60) family. Forms a cylinder of 14 subunits composed of two heptameric rings stacked back-to-back. Interacts with the co-chaperonin GroES.

The protein localises to the cytoplasm. It catalyses the reaction ATP + H2O + a folded polypeptide = ADP + phosphate + an unfolded polypeptide.. In terms of biological role, together with its co-chaperonin GroES, plays an essential role in assisting protein folding. The GroEL-GroES system forms a nano-cage that allows encapsulation of the non-native substrate proteins and provides a physical environment optimized to promote and accelerate protein folding. The sequence is that of Chaperonin GroEL 1 from Mycolicibacterium gilvum (strain PYR-GCK) (Mycobacterium gilvum (strain PYR-GCK)).